Consider the following 248-residue polypeptide: ATP synthase subunit a (248 aa).

5 helical membrane passes run 31-51, 90-110, 129-149, 195-215, and 216-236; these read GQVL…VILG, VPYV…GNLF, INTT…AGIS, VIAV…MVLF, and LFTG…YIGE.

This sequence belongs to the ATPase A chain family. F-type ATPases have 2 components, CF(1) - the catalytic core - and CF(0) - the membrane proton channel. CF(1) has five subunits: alpha(3), beta(3), gamma(1), delta(1), epsilon(1). CF(0) has four main subunits: a, b, b' and c.

Its subcellular location is the cellular thylakoid membrane. Functionally, key component of the proton channel; it plays a direct role in the translocation of protons across the membrane. The polypeptide is ATP synthase subunit a (Synechococcus sp. (strain JA-2-3B'a(2-13)) (Cyanobacteria bacterium Yellowstone B-Prime)).